The chain runs to 167 residues: Protein-export protein SecB (167 aa).

It belongs to the SecB family. Homotetramer, a dimer of dimers. One homotetramer interacts with 1 SecA dimer.

Its subcellular location is the cytoplasm. In terms of biological role, one of the proteins required for the normal export of preproteins out of the cell cytoplasm. It is a molecular chaperone that binds to a subset of precursor proteins, maintaining them in a translocation-competent state. It also specifically binds to its receptor SecA. This Idiomarina loihiensis (strain ATCC BAA-735 / DSM 15497 / L2-TR) protein is Protein-export protein SecB.